Reading from the N-terminus, the 126-residue chain is Thioredoxin H-type 1 (126 aa).

The Thioredoxin domain occupies alanine 2 to alanine 120. Residues cysteine 46 and cysteine 49 each act as nucleophile in the active site. A disulfide bridge links cysteine 46 with cysteine 49.

Belongs to the thioredoxin family. Plant H-type subfamily.

The protein localises to the cytoplasm. Participates in various redox reactions through the reversible oxidation of the active center dithiol to a disulfide. The H form is known to activate a number of cytosolic enzymes. This chain is Thioredoxin H-type 1, found in Nicotiana tabacum (Common tobacco).